The primary structure comprises 78 residues: uncharacterized protein (78 aa).

A signal peptide spans 1–22 (MFKKSVLFATLLSGVMAFSTNA).

The protein belongs to the BhsA/McbA family.

The protein resides in the periplasm. Probably involved in reactive chlorine species (RCS) stress resistance. This is an uncharacterized protein from Escherichia coli (strain K12).